The following is a 1337-amino-acid chain: Multidrug resistance protein fer6 (1337 aa).

The first 23 residues, 1-23 (MTPEASANWFSLCWFAWIDPILT), serve as a signal peptide directing secretion. The N-linked (GlcNAc...) asparagine glycan is linked to N71. Helical transmembrane passes span 94–114 (FWIG…SPLL) and 138–158 (LGSG…CVFL). In terms of domain architecture, ABC transmembrane type-1 1 spans 95–386 (WIGGLLKLLA…LPIAWNAIVD (292 aa)). N-linked (GlcNAc...) asparagine glycosylation occurs at N187. The next 4 helical transmembrane spans lie at 220-242 (FFHM…IWSL), 247-269 (LPGI…RLFA), 331-351 (ALAF…YALV), and 359-379 (ILFS…FLPI). In terms of domain architecture, ABC transporter 1 spans 417 to 667 (IQLEDASFTW…KGRVAELLLT (251 aa)). A disordered region spans residues 432–460 (ADTAKPVNEKKGQDSPSNEKETPVDRAST). Residues 438 to 455 (VNEKKGQDSPSNEKETPV) show a composition bias toward basic and acidic residues. An N-linked (GlcNAc...) asparagine glycan is attached at N465. 478-485 (GGVGSGKS) is an ATP binding site. The tract at residues 699-751 (GSASNRNSEASESTTTTVNAESKDTSNAEGVTNKTEKKDLVAPPAQAKSKALM) is disordered. A compositionally biased stretch (low complexity) spans 700–718 (SASNRNSEASESTTTTVNA). An N-linked (GlcNAc...) asparagine glycan is attached at N731. The next 6 helical transmembrane spans lie at 769–789 (YLNA…VLVF), 817–837 (GIYA…GVIF), 890–909 (AMRT…VLIA), 915–933 (FLIP…AAYY), 999–1019 (LSVR…ILVV), and 1028–1048 (GETG…GWMI). Positions 781-1056 (LFLVAVLVFQ…MIRHAAELEN (276 aa)) constitute an ABC transmembrane type-1 2 domain. Residue N1057 is glycosylated (N-linked (GlcNAc...) asparagine). The ABC transporter 2 domain occupies 1097–1325 (IRFEGVEAKY…EKGAFRALCD (229 aa)). 1131-1138 (GRTGAGKS) serves as a coordination point for ATP. N1227 carries an N-linked (GlcNAc...) asparagine glycan.

This sequence belongs to the ABC transporter superfamily. ABCC family. Conjugate transporter (TC 3.A.1.208) subfamily.

The protein resides in the membrane. Functionally, multidrug resistance protein; part of the gene cluster that mediates the biosynthesis of siderophore ferrichrome A which is contributing to organismal virulence. The sequence is that of Multidrug resistance protein fer6 from Mycosarcoma maydis (Corn smut fungus).